Consider the following 323-residue polypeptide: tRNA dimethylallyltransferase (323 aa).

12-19 (GPTAAGKT) is an ATP binding site. 14-19 (TAAGKT) is a substrate binding site. Interaction with substrate tRNA stretches follow at residues 37–40 (DSAL) and 161–165 (QRLIR).

The protein belongs to the IPP transferase family. As to quaternary structure, monomer. Requires Mg(2+) as cofactor.

The catalysed reaction is adenosine(37) in tRNA + dimethylallyl diphosphate = N(6)-dimethylallyladenosine(37) in tRNA + diphosphate. Catalyzes the transfer of a dimethylallyl group onto the adenine at position 37 in tRNAs that read codons beginning with uridine, leading to the formation of N6-(dimethylallyl)adenosine (i(6)A). This Pseudomonas syringae pv. tomato (strain ATCC BAA-871 / DC3000) protein is tRNA dimethylallyltransferase.